Here is a 454-residue protein sequence, read N- to C-terminus: Histidine--tRNA ligase (454 aa).

Belongs to the class-II aminoacyl-tRNA synthetase family. As to quaternary structure, homodimer.

It is found in the cytoplasm. The enzyme catalyses tRNA(His) + L-histidine + ATP = L-histidyl-tRNA(His) + AMP + diphosphate + H(+). This is Histidine--tRNA ligase from Bacteroides fragilis (strain ATCC 25285 / DSM 2151 / CCUG 4856 / JCM 11019 / LMG 10263 / NCTC 9343 / Onslow / VPI 2553 / EN-2).